We begin with the raw amino-acid sequence, 307 residues long: Bifunctional protein FolD (307 aa).

NADP(+)-binding positions include 170-172 (GRS), serine 195, and isoleucine 236.

Belongs to the tetrahydrofolate dehydrogenase/cyclohydrolase family. Homodimer.

The enzyme catalyses (6R)-5,10-methylene-5,6,7,8-tetrahydrofolate + NADP(+) = (6R)-5,10-methenyltetrahydrofolate + NADPH. It catalyses the reaction (6R)-5,10-methenyltetrahydrofolate + H2O = (6R)-10-formyltetrahydrofolate + H(+). It participates in one-carbon metabolism; tetrahydrofolate interconversion. In terms of biological role, catalyzes the oxidation of 5,10-methylenetetrahydrofolate to 5,10-methenyltetrahydrofolate and then the hydrolysis of 5,10-methenyltetrahydrofolate to 10-formyltetrahydrofolate. This Sinorhizobium fredii (strain NBRC 101917 / NGR234) protein is Bifunctional protein FolD.